The following is an 865-amino-acid chain: Alanine--tRNA ligase (865 aa).

Residues His-554, His-558, Cys-656, and His-660 each coordinate Zn(2+).

The protein belongs to the class-II aminoacyl-tRNA synthetase family. The cofactor is Zn(2+).

Its subcellular location is the cytoplasm. The catalysed reaction is tRNA(Ala) + L-alanine + ATP = L-alanyl-tRNA(Ala) + AMP + diphosphate. Catalyzes the attachment of alanine to tRNA(Ala) in a two-step reaction: alanine is first activated by ATP to form Ala-AMP and then transferred to the acceptor end of tRNA(Ala). Also edits incorrectly charged Ser-tRNA(Ala) and Gly-tRNA(Ala) via its editing domain. The chain is Alanine--tRNA ligase from Francisella tularensis subsp. tularensis (strain WY96-3418).